A 316-amino-acid chain; its full sequence is Pantothenate kinase (316 aa).

Position 95–102 (95–102) interacts with ATP; sequence GSVAVGKS.

It belongs to the prokaryotic pantothenate kinase family.

It localises to the cytoplasm. It carries out the reaction (R)-pantothenate + ATP = (R)-4'-phosphopantothenate + ADP + H(+). Its pathway is cofactor biosynthesis; coenzyme A biosynthesis; CoA from (R)-pantothenate: step 1/5. In Shewanella halifaxensis (strain HAW-EB4), this protein is Pantothenate kinase.